Consider the following 177-residue polypeptide: Ribosome rescue factor SmrB (177 aa).

A Smr domain is found at 98–173; sequence LDMHGMKQDE…GAGAILVLLS (76 aa).

It belongs to the SmrB family. Associates with collided ribosomes, but not with correctly translating polysomes.

In terms of biological role, acts as a ribosome collision sensor. Detects stalled/collided disomes (pairs of ribosomes where the leading ribosome is stalled and a second ribosome has collided with it) and endonucleolytically cleaves mRNA at the 5' boundary of the stalled ribosome. Stalled/collided disomes form a new interface (primarily via the 30S subunits) that binds SmrB. Cleaved mRNA becomes available for tmRNA ligation, leading to ribosomal subunit dissociation and rescue of stalled ribosomes. In Aliivibrio fischeri (strain ATCC 700601 / ES114) (Vibrio fischeri), this protein is Ribosome rescue factor SmrB.